A 308-amino-acid chain; its full sequence is 4-hydroxyproline 2-epimerase (308 aa).

Catalysis depends on cysteine 88, which acts as the Proton acceptor. Residues 89–90 (GH), histidine 208, and aspartate 232 contribute to the substrate site. Cysteine 236 acts as the Proton donor in catalysis. A substrate-binding site is contributed by 237–238 (GT).

This sequence belongs to the proline racemase family.

The catalysed reaction is trans-4-hydroxy-L-proline = cis-4-hydroxy-D-proline. Its function is as follows. Catalyzes the epimerization of trans-4-hydroxy-L-proline (t4LHyp) to cis-4-hydroxy-D-proline (c4DHyp). Is likely involved in a degradation pathway that converts t4LHyp to alpha-ketoglutarate. Can also catalyze the epimerization of trans-3-hydroxy-L-proline (t3LHyp) to cis-3-hydroxy-D-proline (c3DHyp), albeit with 200-fold lower efficiency. This Pseudomonas putida (strain ATCC 700007 / DSM 6899 / JCM 31910 / BCRC 17059 / LMG 24140 / F1) protein is 4-hydroxyproline 2-epimerase.